The chain runs to 1154 residues: Serine-aspartate repeat-containing protein E (1154 aa).

The signal sequence occupies residues 1–52 (MINRDNKKAITKKGMISNRLNKFSIRKYTVGTASILVGTTLIFGLGNQEAKA). Residues 23-34 (FSIRKYTVGTAS) carry the YSIRK-G/S signaling motif motif. A ligand binding A region region spans residues 53–606 (AENTSTENAK…GDGTVKPEEK (554 aa)). The tract at residues 54–230 (ENTSTENAKQ…SKEELKNNPE (177 aa)) is disordered. Residues 61–75 (AKQDDATTSDNKEVV) show a composition bias toward basic and acidic residues. Residues 77–90 (ETENNSTTENNSTN) are compositionally biased toward low complexity. A compositionally biased stretch (basic and acidic residues) spans 92 to 108 (IKKETNTDSQPEAKKES). A compositionally biased stretch (polar residues) spans 118 to 129 (NNVTATTETKPQ). The segment covering 130–145 (NIEKENVKPSTDKTAT) has biased composition (basic and acidic residues). Over residues 166–178 (TTKPSTSEPSTSE) the composition is skewed to low complexity. The span at 179 to 212 (IQTKPTTPQESTNIENSQPQPTPSKVDNQVTDAT) shows a compositional bias: polar residues. The segment covering 221-230 (SKEELKNNPE) has biased composition (basic and acidic residues). CNA-B domains follow at residues 607 to 719 (LYKI…YKEP), 720 to 829 (KYNL…YKTP), and 830 to 940 (KYSL…EEDT). Residues 904–1129 (VTNTTEDDKD…TGSENNGSNN (226 aa)) form a disordered region. Composition is skewed to acidic residues over residues 908–918 (TEDDKDADGGE) and 935–1093 (YFEE…DSDS). Positions 1117–1121 (LPETG) match the LPXTG sorting signal motif. Threonine 1120 carries the post-translational modification Pentaglycyl murein peptidoglycan amidated threonine. A propeptide spans 1121–1154 (GSENNGSNNATLFGGLFAALGSLLLFGRRKKQNK) (removed by sortase).

It belongs to the serine-aspartate repeat-containing protein (SDr) family. In terms of assembly, interacts with host complement factor H/CFAH (via C-terminus). Interacts with host complement regulator C4BPA.

The protein resides in the secreted. The protein localises to the cell wall. Functionally, cell surface-associated calcium-binding protein which plays an important role in adhesion and pathogenesis. Contributes to the resistance to killing by innate immune components in blood and thus attenuates bacterial clearance by interacting with host complement factor H/CFAH and modulating its activity. Also inhibits bacterial opsonization and killing by interacting with host complement regulator C4BPA and thus inhibiting classical complement pathway activation. This is Serine-aspartate repeat-containing protein E (sdrE) from Staphylococcus aureus (strain USA300).